Here is a 405-residue protein sequence, read N- to C-terminus: Acetate kinase (405 aa).

A Mg(2+)-binding site is contributed by asparagine 7. Lysine 14 serves as a coordination point for ATP. Arginine 98 contributes to the substrate binding site. Aspartate 155 serves as the catalytic Proton donor/acceptor. Residues 214–218, 289–291, and 337–341 each bind ATP; these read HLGNG, DLR, and GVGEN. Residue glutamate 390 coordinates Mg(2+).

The protein belongs to the acetokinase family. Homodimer. It depends on Mg(2+) as a cofactor. Requires Mn(2+) as cofactor.

It is found in the cytoplasm. The catalysed reaction is acetate + ATP = acetyl phosphate + ADP. It functions in the pathway metabolic intermediate biosynthesis; acetyl-CoA biosynthesis; acetyl-CoA from acetate: step 1/2. Its function is as follows. Catalyzes the formation of acetyl phosphate from acetate and ATP. Can also catalyze the reverse reaction. In Gloeothece citriformis (strain PCC 7424) (Cyanothece sp. (strain PCC 7424)), this protein is Acetate kinase.